The sequence spans 1134 residues: Ubinuclein-1 (1134 aa).

Disordered stretches follow at residues 1–38 and 78–98; these read MSEPHRVQFTSLPGSLNPAFLKKSRKEEAGAGEQHQDC and LQPGDKKKDLSDPFNDEEKER. Positions 1–166 are sufficient for interaction with HIRA; it reads MSEPHRVQFT…YGGFYINSGT (166 aa). Basic and acidic residues-rich tracts occupy residues 25–38 and 81–98; these read RKEEAGAGEQHQDC and GDKKKDLSDPFNDEEKER. At threonine 166 the chain carries Phosphothreonine. Positions 171-220 are disordered; the sequence is QASESEDDFIKEKKKKSPKKRKLKEGGEKIKKKKKDDTYDKEKKSKKSKF. Serine 173 and serine 175 each carry phosphoserine. A compositionally biased stretch (basic residues) spans 182 to 193; the sequence is EKKKKSPKKRKL. Basic and acidic residues predominate over residues 194-213; sequence KEGGEKIKKKKKDDTYDKEK. At lysine 222 the chain carries N6-acetyllysine. A compositionally biased stretch (basic and acidic residues) spans 253-268; it reads QKEKEAQKKREEEHKP. Disordered regions lie at residues 253-282, 321-358, 480-504, and 594-660; these read QKEKEAQKKREEEHKPVAVPSAEAQGLREL, SESPEGSPFRDMDDGSDSLGVGLDQEFRQPSSLPEGLP, EEEKDKEQRDRICSDEEEDEEKGGR, and PSKI…LEDS. Serine 323, serine 336, serine 338, and serine 493 each carry phosphoserine. Residues 479–542 are a coiled coil; that stretch reads LEEEKDKEQR…SQDLERNNKA (64 aa). Composition is skewed to basic and acidic residues over residues 480-493 and 598-610; these read EEEKDKEQRDRICS and KVKESSTKPDKKV. Serine 660 and serine 677 each carry phosphoserine. 2 disordered regions span residues 712–836 and 852–986; these read TEEK…SPTQ and QGFH…GVAK. Low complexity-rich tracts occupy residues 792–804 and 856–891; these read GPQVAVPVPGPQV and PSAPATSGGLSASSSSSHKTPASSSSALSHPAKPHS. Residues 892–905 are compositionally biased toward polar residues; sequence VSSAGSSYKNNPFA. Positions 906-932 are enriched in low complexity; that stretch reads SSISKHGVSSGSSSSGGTPVQSSVSGS. Positions 941 to 950 are enriched in polar residues; that stretch reads SVGQATSRPV. Positions 973–982 are enriched in gly residues; the sequence is PNGDSSGGTQ. The residue at position 1025 (serine 1025) is a Phosphoserine. Low complexity predominate over residues 1093–1108; the sequence is GLHSSPPHAAPLPHAA. The segment at 1093-1134 is disordered; the sequence is GLHSSPPHAAPLPHAAVPTHIPQSLPGASQLHGKGPAVPRKL.

It belongs to the ubinuclein family. Component of a complex that includes at least ASF1A, CABIN1, HIRA, histone H3.3 and UBN1. Interacts with HIRA (via WD repeat domain); the interaction is direct. Interacts with ASF1A, CEBPA, TJP1, TJP2 and TJP3. As to quaternary structure, (Microbial infection) Interacts with Epstein-Barr virus BZLF1. As to expression, ubiquitous. Also expressed in numerous tumors and cancer cell lines.

The protein localises to the nucleus. Its subcellular location is the nucleoplasm. The protein resides in the PML body. It is found in the cell junction. It localises to the tight junction. In terms of biological role, acts as a novel regulator of senescence. Involved in the formation of senescence-associated heterochromatin foci (SAHF), which represses expression of proliferation-promoting genes. Binds to proliferation-promoting genes. May be required for replication-independent chromatin assembly. The polypeptide is Ubinuclein-1 (UBN1) (Homo sapiens (Human)).